A 144-amino-acid polypeptide reads, in one-letter code: Large ribosomal subunit protein uL15 (144 aa).

Residues 1–52 are disordered; that stretch reads MRLNTLSPAEGAKHAPKRVGRGIGSGLGKTAGRGHKGQNSRSGGGVRRGFEG. The span at 21–31 shows a compositional bias: gly residues; that stretch reads RGIGSGLGKTA.

Belongs to the universal ribosomal protein uL15 family. Part of the 50S ribosomal subunit.

Binds to the 23S rRNA. The polypeptide is Large ribosomal subunit protein uL15 (Yersinia enterocolitica serotype O:8 / biotype 1B (strain NCTC 13174 / 8081)).